The following is a 267-amino-acid chain: Cell division protein FtsQ (267 aa).

Over 1-32 the chain is Cytoplasmic; the sequence is MRQKTISNKNKQTKNTNNISLRRKLGLMYKKA. A helical membrane pass occupies residues 33 to 53; that stretch reads ILVLKIVLMIFVCLFVFTKYF. Topologically, residues 54 to 267 are periplasmic; that stretch reads TSIKTYLITN…DRNKYYIQKY (214 aa). Residues 73-141 form the POTRA domain; the sequence is FRLENVIIEG…NTVYIKLFER (69 aa).

It belongs to the FtsQ/DivIB family. FtsQ subfamily.

It localises to the cell inner membrane. In terms of biological role, essential cell division protein. This Rickettsia prowazekii (strain Madrid E) protein is Cell division protein FtsQ.